The primary structure comprises 447 residues: Phosphoglucosamine mutase (447 aa).

Ser-103 acts as the Phosphoserine intermediate in catalysis. Mg(2+) is bound by residues Ser-103, Asp-242, Asp-244, and Asp-246. Phosphoserine is present on Ser-103.

The protein belongs to the phosphohexose mutase family. Mg(2+) serves as cofactor. Activated by phosphorylation.

It catalyses the reaction alpha-D-glucosamine 1-phosphate = D-glucosamine 6-phosphate. Its function is as follows. Catalyzes the conversion of glucosamine-6-phosphate to glucosamine-1-phosphate. This is Phosphoglucosamine mutase from Marinobacter nauticus (strain ATCC 700491 / DSM 11845 / VT8) (Marinobacter aquaeolei).